We begin with the raw amino-acid sequence, 189 residues long: Keratin-associated protein 5-2 (189 aa).

Tandem repeats lie at residues 21–24 (CCKP), 27–30 (CCKP), 33–36 (CCVP), 134–137 (CCKP), 144–147 (CCKP), 159–162 (CCKP), 169–172 (CCKP), and 179–182 (CCAP). The interval 27–182 (CCKPVCCCVP…CCCQSSCCAP (156 aa)) is 8 X 4 AA repeats of C-C-X-P.

It belongs to the KRTAP type 5 family. As to quaternary structure, interacts with hair keratins.

Functionally, in the hair cortex, hair keratin intermediate filaments are embedded in an interfilamentous matrix, consisting of hair keratin-associated protein (KRTAP), which are essential for the formation of a rigid and resistant hair shaft through their extensive disulfide bond cross-linking with abundant cysteine residues of hair keratins. The matrix proteins include the high-sulfur and high-glycine-tyrosine keratins. This is Keratin-associated protein 5-2 from Mus musculus (Mouse).